The following is a 642-amino-acid chain: Kinesin-like protein KIN-7L (642 aa).

The region spanning 3–337 (KISVAVRFRP…LQFASRAKCV (335 aa)) is the Kinesin motor domain. Residues 12–27 (PPTTAAPAADQSPSST) are compositionally biased toward low complexity. A disordered region spans residues 12–33 (PPTTAAPAADQSPSSTGGDREW). An ATP-binding site is contributed by 94-101 (GQTSSGKT). 2 coiled-coil regions span residues 343 to 428 (VNEI…SNTS) and 540 to 612 (RQQL…FSQA).

The protein belongs to the TRAFAC class myosin-kinesin ATPase superfamily. Kinesin family. KIN-7 subfamily.

This Oryza sativa subsp. japonica (Rice) protein is Kinesin-like protein KIN-7L.